Reading from the N-terminus, the 678-residue chain is Protein MALE DISCOVERER 2 (678 aa).

The N-terminal stretch at 1-25 is a signal peptide; it reads MMGCGFHFPWFFFLIIGLQAPLSLS. Topologically, residues 26–323 are extracellular; sequence LTSQGSALLK…SKGSKHVWLY (298 aa). Residue Asn-52 is glycosylated (N-linked (GlcNAc...) asparagine). LRR repeat units follow at residues 71–94, 95–117, 119–141, and 143–164; these read KVQI…SQLS, DLRS…YGSF, NLEV…LSNG, and SLKH…KIVR. Residues 247-314 are disordered; that stretch reads LAAEPAPSAP…KNQPQDNKQS (68 aa). The segment covering 296–311 has biased composition (polar residues); it reads KGSTSPDISKNQPQDN. A helical membrane pass occupies residues 324-344; that stretch reads VVIAVASFVGLLIIVAVIFFC. Residues 345-678 lie on the Cytoplasmic side of the membrane; it reads RKRAVKSIGP…ELEILSSEAT (334 aa). The 306-residue stretch at 346-651 folds into the Protein kinase domain; that stretch reads KRAVKSIGPW…DVAEQLKQVI (306 aa).

The protein belongs to the protein kinase superfamily. Ser/Thr protein kinase family. Expressed in pollen tubes and seedlings.

Its subcellular location is the endomembrane system. The enzyme catalyses L-seryl-[protein] + ATP = O-phospho-L-seryl-[protein] + ADP + H(+). It catalyses the reaction L-threonyl-[protein] + ATP = O-phospho-L-threonyl-[protein] + ADP + H(+). Involved in the pollen tube perception of the female signal by binding an unidentified female attractant. May be involved in the regulation of root hairs development. The polypeptide is Protein MALE DISCOVERER 2 (MDIS2) (Arabidopsis thaliana (Mouse-ear cress)).